Here is a 338-residue protein sequence, read N- to C-terminus: Sesquiterpene synthase 2 (338 aa).

Aspartate 93, asparagine 228, serine 232, and glutamate 236 together coordinate Mg(2+). The DDXXD motif signature appears at 93-97 (DNISD). The NSE/DTE motif motif lies at 228-236 (NDIFSYNVE). (2E,6E)-farnesyl diphosphate-binding residues include arginine 316 and tyrosine 317.

Belongs to the terpene synthase family. The cofactor is Mg(2+).

It carries out the reaction (2E,6E)-farnesyl diphosphate = alpha-copaene + diphosphate. It catalyses the reaction (2E,6E)-farnesyl diphosphate = beta-copaene + diphosphate. The catalysed reaction is (2E,6E)-farnesyl diphosphate = alpha-muurolene + diphosphate. The enzyme catalyses (2E,6E)-farnesyl diphosphate = gamma-muurolene + diphosphate. It carries out the reaction (2E,6E)-farnesyl diphosphate = delta-cadinene + diphosphate. Terpene cyclase that catalyzes the cyclization of farnesyl diphosphate (FPP) to various sesquiterpenes, including alpha-copaene, beta-copaene, beta-elemene, alpha-muurolene, gamma-muurolene and delta-cadinene. In Postia placenta (strain ATCC 44394 / Madison 698-R) (Brown rot fungus), this protein is Sesquiterpene synthase 2.